The primary structure comprises 116 residues: uncharacterized protein (116 aa).

The disordered stretch occupies residues 77–116; sequence SATSHYPKADDPQRFARSVSRGPSRVRRPARNSASRPVRR.

This is an uncharacterized protein from Frog virus 3 (isolate Goorha) (FV-3).